A 496-amino-acid chain; its full sequence is MLIFERSRPGRGATAQAPLREATVSGLPERFRRGTRAPLPELSELDVVRHYTRLSQKNFSIDTQFYPLGSCTMKYNPRACNSLAMLPGFLGRHPHAPDTHSQGFLACMFELQEMLRDVTGMKGGVSLTPMAGAQGEFAGVAMIRAYHDARKDTARTEILVPDAAHGTNPATATMCGYTVKEIPTDDSGDVDMEALKAALGPHTAGIMLTNPSTLGVFERRIKEIADLVHQAGGLLYYDGANLNAILGKVRPGDMGFDVIHMNLHKTFSTPHGGGGPGAGAVGVSERLRPFMPIPVVAKEGERYRFMTEKDLPQSIGRLSAFAGNAGVLLRAYVYMRMLGRAGMPRVAEFSTLNANYVMARLREKGFELAFPGRRATHEFIVTLKRLAKDTEVTAMDVAKRLLDFNYHAPTTYFPLLVPECLLIEPTETESKETLDGFVEAMAEILEEARTSPDKVKGAPYTQPNRRFDEVRAARELDVAWRPGAALDEVAEQGRTD.

An N6-(pyridoxal phosphate)lysine modification is found at K265.

This sequence belongs to the GcvP family. C-terminal subunit subfamily. The glycine cleavage system is composed of four proteins: P, T, L and H. In this organism, the P 'protein' is a heterodimer of two subunits. Requires pyridoxal 5'-phosphate as cofactor.

It carries out the reaction N(6)-[(R)-lipoyl]-L-lysyl-[glycine-cleavage complex H protein] + glycine + H(+) = N(6)-[(R)-S(8)-aminomethyldihydrolipoyl]-L-lysyl-[glycine-cleavage complex H protein] + CO2. In terms of biological role, the glycine cleavage system catalyzes the degradation of glycine. The P protein binds the alpha-amino group of glycine through its pyridoxal phosphate cofactor; CO(2) is released and the remaining methylamine moiety is then transferred to the lipoamide cofactor of the H protein. The chain is Probable glycine dehydrogenase (decarboxylating) subunit 2 from Thioalkalivibrio sulfidiphilus (strain HL-EbGR7).